Here is an 880-residue protein sequence, read N- to C-terminus: Lon protease (880 aa).

The segment at 1-37 (MADYNDKNYLLHMSGPDSDTGPGIENEDPRAVENPGH) is disordered. Basic and acidic residues predominate over residues 27–37 (EDPRAVENPGH). The Lon N-terminal domain occupies 57-251 (LPILPVRDVV…LVNTQLQREV (195 aa)). Residue 404–411 (GPPGVGKT) coordinates ATP. The 182-residue stretch at 640-821 (KLMPGMALGL…DELLPLVFEG (182 aa)) folds into the Lon proteolytic domain. Active-site residues include Ser-727 and Lys-770. A compositionally biased stretch (gly residues) spans 826–836 (GGVSGAGQAGD). A disordered region spans residues 826 to 880 (GGVSGAGQAGDKGGKSKAAAGKKDVVAARPAKPAAPARRRKDKTEDELPTAEAGA). Low complexity predominate over residues 852 to 861 (AARPAKPAAP).

Belongs to the peptidase S16 family. As to quaternary structure, homohexamer. Organized in a ring with a central cavity.

The protein resides in the cytoplasm. It catalyses the reaction Hydrolysis of proteins in presence of ATP.. Its function is as follows. ATP-dependent serine protease that mediates the selective degradation of mutant and abnormal proteins as well as certain short-lived regulatory proteins. Required for cellular homeostasis and for survival from DNA damage and developmental changes induced by stress. Degrades polypeptides processively to yield small peptide fragments that are 5 to 10 amino acids long. Binds to DNA in a double-stranded, site-specific manner. This chain is Lon protease, found in Desulfovibrio desulfuricans (strain ATCC 27774 / DSM 6949 / MB).